A 371-amino-acid polypeptide reads, in one-letter code: Cytochrome b (371 aa).

4 helical membrane-spanning segments follow: residues 25–45, 69–90, 105–125, and 170–190; these read FGSM…FLAV, WLMQ…YTHI, WLSG…GYVL, and FFAL…LHIM. Heme b contacts are provided by His75 and His89. Residues His174 and His188 each contribute to the heme b site. A ubiquinone is bound at residue His193. 4 helical membrane-spanning segments follow: residues 218-238, 280-300, 312-332, and 339-358; these read YKDM…VAFF, LGGA…PFTH, IMQF…WAAT, and FTAI…ITNP.

It belongs to the cytochrome b family. The cytochrome bc1 complex contains 3 respiratory subunits (MT-CYB, CYC1 and UQCRFS1), 2 core proteins (UQCRC1 and UQCRC2) and probably 6 low-molecular weight proteins. It depends on heme b as a cofactor.

The protein localises to the mitochondrion inner membrane. Its function is as follows. Component of the ubiquinol-cytochrome c reductase complex (complex III or cytochrome b-c1 complex) that is part of the mitochondrial respiratory chain. The b-c1 complex mediates electron transfer from ubiquinol to cytochrome c. Contributes to the generation of a proton gradient across the mitochondrial membrane that is then used for ATP synthesis. This is Cytochrome b (MT-CYB) from Eryx colubrinus loveridgei.